Consider the following 864-residue polypeptide: Bifunctional uridylyltransferase/uridylyl-removing enzyme (864 aa).

The segment at 1-328 (MLFPYFPLSE…QTNEPVQVRL (328 aa)) is uridylyltransferase. The tract at residues 329 to 686 (LDKEFQCVNN…ISNRFSEGGT (358 aa)) is uridylyl-removing. The 117-residue stretch at 446 to 562 (VDEHIVRTLL…LHFAEAVQNN (117 aa)) folds into the HD domain. ACT domains are found at residues 687-766 (EIFV…TFRA) and 793-864 (EMEL…LEPK).

The protein belongs to the GlnD family. Requires Mg(2+) as cofactor.

It carries out the reaction [protein-PII]-L-tyrosine + UTP = [protein-PII]-uridylyl-L-tyrosine + diphosphate. It catalyses the reaction [protein-PII]-uridylyl-L-tyrosine + H2O = [protein-PII]-L-tyrosine + UMP + H(+). Its activity is regulated as follows. Uridylyltransferase (UTase) activity is inhibited by glutamine, while glutamine activates uridylyl-removing (UR) activity. Functionally, modifies, by uridylylation and deuridylylation, the PII regulatory proteins (GlnB and homologs), in response to the nitrogen status of the cell that GlnD senses through the glutamine level. Under low glutamine levels, catalyzes the conversion of the PII proteins and UTP to PII-UMP and PPi, while under higher glutamine levels, GlnD hydrolyzes PII-UMP to PII and UMP (deuridylylation). Thus, controls uridylylation state and activity of the PII proteins, and plays an important role in the regulation of nitrogen assimilation and metabolism. This chain is Bifunctional uridylyltransferase/uridylyl-removing enzyme, found in Pasteurella multocida (strain Pm70).